A 115-amino-acid polypeptide reads, in one-letter code: Large ribosomal subunit protein uL18 (115 aa).

A disordered region spans residues 1–29 (MISKPDKNKLRQKRHTRVRGKISGTSETP). The span at 10–20 (LRQKRHTRVRG) shows a compositional bias: basic residues.

Belongs to the universal ribosomal protein uL18 family. In terms of assembly, part of the 50S ribosomal subunit; part of the 5S rRNA/L5/L18/L25 subcomplex. Contacts the 5S and 23S rRNAs.

In terms of biological role, this is one of the proteins that bind and probably mediate the attachment of the 5S RNA into the large ribosomal subunit, where it forms part of the central protuberance. The polypeptide is Large ribosomal subunit protein uL18 (Lactococcus lactis subsp. lactis (strain IL1403) (Streptococcus lactis)).